Reading from the N-terminus, the 270-residue chain is Proteasome inhibitor PI31 subunit (270 aa).

At alanine 2 the chain carries N-acetylalanine. The interval 2–150 (AGLEVLFASA…PIHEQWEKAN (149 aa)) is important for homodimerization and interaction with FBXO7. Serine 152 carries the post-translational modification Phosphoserine. At arginine 204 the chain carries Omega-N-methylarginine. Asymmetric dimethylarginine is present on arginine 218. Residues 220 to 270 (LIDPSSGLPNRLPPGAVPPGARFDPFGPIGTSPSGPNPDHLPPPGYDDMYL) form a disordered region. Arginine 230 bears the Omega-N-methylarginine mark. Serine 251 carries the post-translational modification Phosphoserine. Pro residues predominate over residues 254–264 (GPNPDHLPPPG).

This sequence belongs to the proteasome inhibitor PI31 family. Monomer and homodimer. Interacts with FBXO7.

The protein localises to the cytoplasm. The protein resides in the endoplasmic reticulum. In terms of biological role, plays an important role in control of proteasome function. Inhibits the hydrolysis of protein and peptide substrates by the 20S proteasome. Also inhibits the activation of the proteasome by the proteasome regulatory proteins PA700 and PA28. In Bos taurus (Bovine), this protein is Proteasome inhibitor PI31 subunit (PSMF1).